A 261-amino-acid chain; its full sequence is Eukaryotic translation initiation factor 3 subunit J-A (261 aa).

Positions 1–11 (MAAAAAAAAAA) are enriched in low complexity. The segment at 1–113 (MAAAAAAAAA…EPEESKVLTP (113 aa)) is disordered. Positions 4–72 (AAAAAAAAGD…KEEAEVKPEV (69 aa)) are sufficient for interaction with EIF3B. S14, S16, and S23 each carry phosphoserine. Residues 43–64 (EGEDEDEDVKDNWDDDDDENKE) are compositionally biased toward acidic residues. Residues 65–109 (EAEVKPEVKISEKKKIAEKIKEKERQQKKRQEEIKKRLEEPEESK) show a composition bias toward basic and acidic residues. The stretch at 73-138 (KISEKKKIAE…ESDLELAKET (66 aa)) forms a coiled coil. K109 participates in a covalent cross-link: Glycyl lysine isopeptide (Lys-Gly) (interchain with G-Cter in SUMO2). The residue at position 112 (T112) is a Phosphothreonine. Residue S130 is modified to Phosphoserine. The segment at 246–261 (YGGYEGGYVQDYEDFM) is promotes stable association with the 40S ribosome. A Phosphotyrosine modification is found at Y257.

Belongs to the eIF-3 subunit J family. In terms of assembly, component of the eukaryotic translation initiation factor 3 (eIF-3) complex, which is composed of 13 subunits: EIF3A, EIF3B, EIF3C, EIF3D, EIF3E, EIF3F, EIF3G, EIF3H, EIF3I, EIF3J, EIF3K, EIF3L and EIF3M. The eIF-3 complex appears to include 3 stable modules: module A is composed of EIF3A, EIF3B, EIF3G and EIF3I; module B is composed of EIF3F, EIF3H, and EIF3M; and module C is composed of EIF3C, EIF3D, EIF3E, EIF3K and EIF3L. EIF3C of module C binds EIF3B of module A and EIF3H of module B, thereby linking the three modules. EIF3J is a labile subunit that binds to the eIF-3 complex via EIF3B. The eIF-3 complex interacts with RPS6KB1 under conditions of nutrient depletion. Mitogenic stimulation leads to binding and activation of a complex composed of MTOR and RPTOR, leading to phosphorylation and release of RPS6KB1 and binding of EIF4B to eIF-3. Post-translationally, phosphorylated. Phosphorylation is enhanced upon serum stimulation.

The protein localises to the cytoplasm. In terms of biological role, component of the eukaryotic translation initiation factor 3 (eIF-3) complex, which is required for several steps in the initiation of protein synthesis. The eIF-3 complex associates with the 40S ribosome and facilitates the recruitment of eIF-1, eIF-1A, eIF-2:GTP:methionyl-tRNAi and eIF-5 to form the 43S pre-initiation complex (43S PIC). The eIF-3 complex stimulates mRNA recruitment to the 43S PIC and scanning of the mRNA for AUG recognition. The eIF-3 complex is also required for disassembly and recycling of post-termination ribosomal complexes and subsequently prevents premature joining of the 40S and 60S ribosomal subunits prior to initiation. The eIF-3 complex specifically targets and initiates translation of a subset of mRNAs involved in cell proliferation, including cell cycling, differentiation and apoptosis, and uses different modes of RNA stem-loop binding to exert either translational activation or repression. This subunit binds directly within the mRNA entry channel of the 40S ribosome to the aminoacyl (A) site. It may regulate the interaction between the 43S PIC and mRNA. The polypeptide is Eukaryotic translation initiation factor 3 subunit J-A (Eif3j1) (Mus musculus (Mouse)).